Consider the following 118-residue polypeptide: Cell division protein FtsB (118 aa).

The Cytoplasmic portion of the chain corresponds to 1 to 3; sequence MRL. Residues 4–21 traverse the membrane as a helical segment; the sequence is LFLVLLVLLGLIQYPLWL. Topologically, residues 22–118 are periplasmic; sequence GKGGWFKVWD…PRPPATPPRR (97 aa). Positions 28–62 form a coiled coil; sequence KVWDLQRQVAEQRETNDGLRARNTALEAEVRDLAT. The segment at 88 to 118 is disordered; sequence LPPGTPLPSGNSTPQASALSKPRPPATPPRR. Polar residues predominate over residues 95–105; that stretch reads PSGNSTPQASA. Over residues 109–118 the composition is skewed to pro residues; that stretch reads PRPPATPPRR.

It belongs to the FtsB family. As to quaternary structure, part of a complex composed of FtsB, FtsL and FtsQ.

The protein resides in the cell inner membrane. Its function is as follows. Essential cell division protein. May link together the upstream cell division proteins, which are predominantly cytoplasmic, with the downstream cell division proteins, which are predominantly periplasmic. The sequence is that of Cell division protein FtsB from Bordetella parapertussis (strain 12822 / ATCC BAA-587 / NCTC 13253).